Reading from the N-terminus, the 718-residue chain is Centromere/kinetochore protein zw10 (718 aa).

This sequence belongs to the ZW10 family.

The protein resides in the cytoplasm. Its subcellular location is the nucleus. It localises to the chromosome. The protein localises to the centromere. It is found in the kinetochore. Functionally, required for accurate chromosome segregation. The protein is Centromere/kinetochore protein zw10 (mit(1)15) of Drosophila pseudoobscura pseudoobscura (Fruit fly).